We begin with the raw amino-acid sequence, 258 residues long: Isoprenyl transferase 2 (258 aa).

Residues 1-18 (MNFPPIHPSTPKMTPPDL) are compositionally biased toward pro residues. The tract at residues 1–21 (MNFPPIHPSTPKMTPPDLDPQ) is disordered. Asp32 is a catalytic residue. Asp32 provides a ligand contact to Mg(2+). Substrate-binding positions include 33–36 (GNGR), Trp37, Arg45, His49, and 77–79 (STE). Asn80 (proton acceptor) is an active-site residue. Substrate contacts are provided by residues Trp81, Arg83, Arg200, and 206-208 (RLS). Glu219 is a binding site for Mg(2+).

This sequence belongs to the UPP synthase family. As to quaternary structure, homodimer. Requires Mg(2+) as cofactor.

Functionally, catalyzes the condensation of isopentenyl diphosphate (IPP) with allylic pyrophosphates generating different type of terpenoids. This Nostoc sp. (strain PCC 7120 / SAG 25.82 / UTEX 2576) protein is Isoprenyl transferase 2.